The chain runs to 894 residues: Microsomal triglyceride transfer protein large subunit (894 aa).

The first 18 residues, 1–18, serve as a signal peptide directing secretion; the sequence is MILLAVLFLCFISSYSAS. In terms of domain architecture, Vitellogenin spans 28–662; that stretch reads LNNDRLYKLK…YVGKTPLHAI (635 aa). Cys-174 and Cys-194 are oxidised to a cystine.

In terms of assembly, heterodimer; heterodimerizes with the protein disulfide isomerase (P4HB/PDI). Interacts with APOB. Interacts with PRAP1.

It is found in the endoplasmic reticulum. It localises to the golgi apparatus. It carries out the reaction a 1,2-diacyl-sn-glycero-3-phosphocholine(in) = a 1,2-diacyl-sn-glycero-3-phosphocholine(out). It catalyses the reaction a 1,2-diacyl-sn-glycero-3-phosphoethanolamine(in) = a 1,2-diacyl-sn-glycero-3-phosphoethanolamine(out). The enzyme catalyses a cholesterol ester(in) = a cholesterol ester(out). The catalysed reaction is a triacyl-sn-glycerol(in) = a triacyl-sn-glycerol(out). Its function is as follows. Catalyzes the transport of triglyceride, cholesteryl ester, and phospholipid between phospholipid surfaces. Required for the assembly and secretion of plasma lipoproteins that contain apolipoprotein B. May be involved in regulating cholesteryl ester biosynthesis in cells that produce lipoproteins. This is Microsomal triglyceride transfer protein large subunit (MTTP) from Sus scrofa (Pig).